A 495-amino-acid polypeptide reads, in one-letter code: Transmembrane protein 161A (495 aa).

The first 28 residues, 1–28 (MALMGVQLVVSLLAVSIMQRMAPHLSFA), serve as a signal peptide directing secretion. Over 29–99 (RWLLCNGSLL…VNVMDALVLR (71 aa)) the chain is Extracellular. Asn34 carries an N-linked (GlcNAc...) asparagine glycan. Residues 100–120 (FFVEYQWLIDFAVYATGIYLF) traverse the membrane as a helical segment. Topologically, residues 121 to 135 (TEGYYSVVDASKEVN) are cytoplasmic. A helical membrane pass occupies residues 136 to 156 (IASIWCVLTVLFCLRTLYLLM). Residues 157–167 (SHYFLSEEGGE) lie on the Extracellular side of the membrane. The helical transmembrane segment at 168 to 188 (RSVCLAFGFLSLLIAMLVLVV) threads the bilayer. Residues 189–227 (REDYLEFGLEPGFTSLFDNFEVFARKQGYEWSVPFTKLS) are Cytoplasmic-facing. Residues 228–248 (VKLGLAVICAFIGALLAFPGL) form a helical membrane-spanning segment. Residues 249 to 265 (RLAQTHLDAVQMNADRP) lie on the Extracellular side of the membrane. The chain crosses the membrane as a helical span at residues 266–286 (MIQILLHMSFLSPLVIIVMWI). Over 287 to 305 (KPIARDFLGNAPMGKTSVT) the chain is Cytoplasmic. A helical membrane pass occupies residues 306–326 (LLSSSAFSSVRLWTIVVLCVL). At 327–367 (RLLLTRYHLQAYLNLAQKWVEQMKKEAGRIAAIDIQRKVTR) the chain is on the extracellular side. Residues 368–388 (IFCYLTVVTLQYLIPILLVLF) form a helical membrane-spanning segment. At 389–465 (STLALKSLGD…ALLTPIFFRG (77 aa)) the chain is on the cytoplasmic side. The helical transmembrane segment at 466 to 486 (IFAFLTWWVAACQLISSLFGI) threads the bilayer. Over 487–495 (YFHQYLMHN) the chain is Extracellular.

Belongs to the TMEM161 family.

Its subcellular location is the membrane. Its function is as follows. May play a role in protection against oxidative stress. This is Transmembrane protein 161A (tmem161a) from Danio rerio (Zebrafish).